The primary structure comprises 498 residues: Glycerol kinase (498 aa).

Residue Thr-13 coordinates ADP. The ATP site is built by Thr-13, Thr-14, and Ser-15. Thr-13 lines the sn-glycerol 3-phosphate pocket. Arg-17 contacts ADP. Sn-glycerol 3-phosphate is bound by residues Arg-83, Glu-84, Tyr-135, and Asp-244. 5 residues coordinate glycerol: Arg-83, Glu-84, Tyr-135, Asp-244, and Gln-245. ADP-binding residues include Thr-266 and Gly-309. Residues Thr-266, Gly-309, Gln-313, and Gly-410 each coordinate ATP. 2 residues coordinate ADP: Gly-410 and Asn-414.

The protein belongs to the FGGY kinase family.

It catalyses the reaction glycerol + ATP = sn-glycerol 3-phosphate + ADP + H(+). Its pathway is polyol metabolism; glycerol degradation via glycerol kinase pathway; sn-glycerol 3-phosphate from glycerol: step 1/1. Its activity is regulated as follows. Inhibited by fructose 1,6-bisphosphate (FBP). Its function is as follows. Key enzyme in the regulation of glycerol uptake and metabolism. Catalyzes the phosphorylation of glycerol to yield sn-glycerol 3-phosphate. In Koribacter versatilis (strain Ellin345), this protein is Glycerol kinase.